The sequence spans 67 residues: Sodium channel neurotoxin MeuNaTxalpha-10 (67 aa).

An LCN-type CS-alpha/beta domain is found at 2-66 (RDGYIAKPHN…VPIRIPGKCH (65 aa)). Cystine bridges form between cysteine 12–cysteine 65, cysteine 16–cysteine 38, cysteine 24–cysteine 48, and cysteine 28–cysteine 50. Position 67 (arginine 67) is a propeptide, removed by a carboxypeptidase.

The protein belongs to the long (4 C-C) scorpion toxin superfamily. Sodium channel inhibitor family. Alpha subfamily. In terms of tissue distribution, expressed by the venom gland.

The protein resides in the secreted. Alpha toxins bind voltage-independently at site-3 of sodium channels (Nav) and inhibit the inactivation of the activated channels, thereby blocking neuronal transmission. This is Sodium channel neurotoxin MeuNaTxalpha-10 from Mesobuthus eupeus (Lesser Asian scorpion).